The primary structure comprises 287 residues: MIELTKPRIVTMILVTTVASALIAGSATLTLIDWFWLMIGTALIAGSAGAANQVWECRIDRNMPRTANRPVPGGRMSYAVAVALTASSGIAGSIILWLGNGLVPACVGIATWLIYVLVYTPMKTRTAWNTTVGAIAGALPVFIGYTAAGGTLTELPGWMLFGVLACWQYPHFMAIAWLYRTQYAEAGFCMTTTVEPTGRHAAWQSILGSVALATCGVVLAWFPDGQWVASAASVLATVLILAASWPLLRASLNFRANPNDKTARKMLRWSLVVLPAVLLVMTLRASL.

A run of 8 helical transmembrane segments spans residues 9–29 (IVTM…SATL), 31–51 (LIDW…AGAA), 94–114 (IILW…TWLI), 132–152 (VGAI…GGTL), 158–178 (WMLF…IAWL), 202–222 (AWQS…LAWF), 228–248 (VASA…WPLL), and 267–287 (LRWS…RASL).

It belongs to the UbiA prenyltransferase family. Protoheme IX farnesyltransferase subfamily.

The protein resides in the cell inner membrane. It catalyses the reaction heme b + (2E,6E)-farnesyl diphosphate + H2O = Fe(II)-heme o + diphosphate. Its pathway is porphyrin-containing compound metabolism; heme O biosynthesis; heme O from protoheme: step 1/1. Its function is as follows. Converts heme B (protoheme IX) to heme O by substitution of the vinyl group on carbon 2 of heme B porphyrin ring with a hydroxyethyl farnesyl side group. This is Protoheme IX farnesyltransferase from Rhodopirellula baltica (strain DSM 10527 / NCIMB 13988 / SH1).